The primary structure comprises 841 residues: Microcephalin (841 aa).

The BRCT 1 domain maps to 1–93; it reads MAAPILKDVV…AHIDESLFPA (93 aa). Ser-278, Ser-286, Ser-295, and Ser-332 each carry phosphoserine. Position 334 is a phosphothreonine (Thr-334). Disordered regions lie at residues 340–375, 417–445, 481–507, and 562–593; these read GHLLIHSRPRSSSVKRKRVSYGFHSPPKEKCKRKRS, PDNLKERNSENLPPESQLPSSPAQFSCRS, SSPQKTANGEGRATLSGVTSEESSAPE, and VGLKSTQDKGTTSKISNSSEGEASSEHEPRSV. Residues 342 to 358 show a composition bias toward basic residues; the sequence is LLIHSRPRSSSVKRKRV. Residues 433-445 are compositionally biased toward polar residues; that stretch reads QLPSSPAQFSCRS. Residues 565–583 are compositionally biased toward polar residues; sequence KSTQDKGTTSKISNSSEGE. BRCT domains follow at residues 646–736 and 757–839; these read SGKG…SFEL and YRGT…NYLL.

In terms of assembly, interacts with CDC27 and maybe other components of the APC/C complex. Interacts with histone variant H2AX under DNA damage conditions.

It is found in the cytoplasm. It localises to the cytoskeleton. Its subcellular location is the microtubule organizing center. The protein localises to the centrosome. Implicated in chromosome condensation and DNA damage induced cellular responses. May play a role in neurogenesis and regulation of the size of the cerebral cortex. This chain is Microcephalin, found in Colobus guereza (Mantled guereza).